The sequence spans 331 residues: tRNA-dihydrouridine(20/20a) synthase (331 aa).

Residues 18-20 (PML) and Gln70 each bind FMN. Cys100 functions as the Proton donor in the catalytic mechanism. Residues Lys139, His172, 212–214 (NGG), and 234–235 (GR) each bind FMN.

It belongs to the Dus family. DusA subfamily. It depends on FMN as a cofactor.

It catalyses the reaction 5,6-dihydrouridine(20) in tRNA + NADP(+) = uridine(20) in tRNA + NADPH + H(+). It carries out the reaction 5,6-dihydrouridine(20) in tRNA + NAD(+) = uridine(20) in tRNA + NADH + H(+). The enzyme catalyses 5,6-dihydrouridine(20a) in tRNA + NADP(+) = uridine(20a) in tRNA + NADPH + H(+). The catalysed reaction is 5,6-dihydrouridine(20a) in tRNA + NAD(+) = uridine(20a) in tRNA + NADH + H(+). Catalyzes the synthesis of 5,6-dihydrouridine (D), a modified base found in the D-loop of most tRNAs, via the reduction of the C5-C6 double bond in target uridines. Specifically modifies U20 and U20a in tRNAs. The protein is tRNA-dihydrouridine(20/20a) synthase of Escherichia coli O6:H1 (strain CFT073 / ATCC 700928 / UPEC).